We begin with the raw amino-acid sequence, 503 residues long: Zinc finger and BTB domain-containing protein 37 (503 aa).

Residues 32 to 96 form the BTB domain; the sequence is CDIVVNVQGQ…CYTGRICLQL (65 aa). Disordered stretches follow at residues 140 to 206 and 280 to 344; these read QTRT…SDVE and GHGS…QVEE. Basic and acidic residues predominate over residues 144-154; sequence KHQERPPESHR. The segment covering 155–167 has biased composition (polar residues); it reads VTPNLNRSLSPRH. A compositionally biased stretch (basic and acidic residues) spans 319-336; sequence TERHRARSESPGRMDEPK. 3 C2H2-type zinc fingers span residues 373–395, 401–423, and 429–452; these read LTCI…MRLH, FVCR…IRKH, and FHCH…RKNH. The tract at residues 457–503 is disordered; that stretch reads PLEGPHSISPETTVTSRGQAEEESPSQEETVAPGEAVQGSVSTTGPD. Residues 465 to 474 are compositionally biased toward polar residues; sequence SPETTVTSRG.

The protein localises to the nucleus. Its function is as follows. May be involved in transcriptional regulation. This is Zinc finger and BTB domain-containing protein 37 (ZBTB37) from Homo sapiens (Human).